The chain runs to 450 residues: Glucose-6-phosphate isomerase (450 aa).

Threonine 39 is subject to Phosphothreonine. Catalysis depends on glutamate 291, which acts as the Proton donor. Residues histidine 312 and lysine 426 contribute to the active site.

This sequence belongs to the GPI family.

The protein resides in the cytoplasm. The enzyme catalyses alpha-D-glucose 6-phosphate = beta-D-fructose 6-phosphate. The protein operates within carbohydrate biosynthesis; gluconeogenesis. Its pathway is carbohydrate degradation; glycolysis; D-glyceraldehyde 3-phosphate and glycerone phosphate from D-glucose: step 2/4. Its function is as follows. Catalyzes the reversible isomerization of glucose-6-phosphate to fructose-6-phosphate. The chain is Glucose-6-phosphate isomerase from Bacillus cereus (strain ATCC 10987 / NRS 248).